The following is a 419-amino-acid chain: Putative trans-acting enoyl reductase MT2525 (419 aa).

An Isoglutamyl lysine isopeptide (Lys-Gln) (interchain with Q-Cter in protein Pup) cross-link involves residue K127. Residues 197–232 (NDPDARRQLSDPYMLSPDRGAEPELGPQPDLPSRRG) are disordered. Residues 284–304 (VLAPVVSVVGGGVGNAMFGLA) form a helical membrane-spanning segment.

This sequence belongs to the saccharopine dehydrogenase family. Enoyl reductase subfamily.

The protein resides in the cell membrane. This Mycobacterium tuberculosis (strain CDC 1551 / Oshkosh) protein is Putative trans-acting enoyl reductase MT2525.